Reading from the N-terminus, the 1168-residue chain is Carbamoyl phosphate synthase arginine-specific large chain, mitochondrial (1168 aa).

The transit peptide at 1–51 directs the protein to the mitochondrion; it reads MLSTVHKAGRAPALLRHGRRVPVQASQLRALTSGAQNTSIFQTQANAAQRL. The segment at 86 to 483 is carboxyphosphate synthetic domain; it reads RDHVDVKKVL…SFQKAIRQVD (398 aa). Residues Arg213, 243–298, Arg253, Gly259, Gly260, Lys290, Leu292, Glu297, Gly323, Ile324, His325, Gln366, and Glu380 contribute to the ATP site; that span reads ANKI…WKEV. In terms of domain architecture, ATP-grasp 1 spans 217–409; that stretch reads AKALEEINIP…LAYTAAKIGL (193 aa). Gln366, Glu380, and Asn382 together coordinate Mg(2+). 3 residues coordinate Mn(2+): Gln366, Glu380, and Asn382. An oligomerization domain region spans residues 484–628; that stretch reads PRFVGFQGDK…YTTYNASSHD (145 aa). Residues 629–1017 form a carbamoyl phosphate synthetic domain region; sequence VTFEDKGTVI…AYWASLQSAM (389 aa). The 198-residue stretch at 754-951 folds into the ATP-grasp 2 domain; the sequence is SEILDSIGVD…FIDAATKALV (198 aa). Residues 780–837, Arg790, Lys829, Ile831, Glu836, Gly861, Val862, His863, Ser864, Gln904, and Glu922 each bind ATP; that span reads AEEV…AQEI. Gln904, Glu922, and Asn924 together coordinate Mg(2+). Residues Gln904, Glu922, and Asn924 each coordinate Mn(2+). Residues 1018-1152 form an allosteric domain region; that stretch reads NFRVPEPGEG…AEKLPRPEGI (135 aa). Positions 1019 to 1168 constitute an MGS-like domain; that stretch reads FRVPEPGEGL…WSEFIGGKPL (150 aa).

This sequence belongs to the CarB family. In terms of assembly, heterodimer composed of 2 chains; the small (or glutamine) chain promotes the hydrolysis of glutamine to ammonia, which is used by the large (or ammonia) chain to synthesize carbamoyl phosphate. It depends on Mg(2+) as a cofactor. The cofactor is Mn(2+).

It is found in the mitochondrion matrix. It catalyses the reaction hydrogencarbonate + L-glutamine + 2 ATP + H2O = carbamoyl phosphate + L-glutamate + 2 ADP + phosphate + 2 H(+). The catalysed reaction is hydrogencarbonate + NH4(+) + 2 ATP = carbamoyl phosphate + 2 ADP + phosphate + 2 H(+). It functions in the pathway amino-acid biosynthesis; L-arginine biosynthesis; carbamoyl phosphate from bicarbonate: step 1/1. Its function is as follows. Large subunit of the arginine-specific carbamoyl phosphate synthase (CPSase). CPSase catalyzes the formation of carbamoyl phosphate from the ammonia moiety of glutamine, hydrogencarbonate, and phosphate donated by ATP, the first step of the arginine biosynthetic pathway. The large subunit (synthetase) binds the substrates ammonia (free or transferred from glutamine from the small subunit), hydrogencarbonate and ATP and carries out an ATP-coupled ligase reaction, activating hydrogencarbonate by forming carboxy phosphate which reacts with ammonia to form carbamoyl phosphate. This is Carbamoyl phosphate synthase arginine-specific large chain, mitochondrial (arg-3) from Neurospora crassa (strain ATCC 24698 / 74-OR23-1A / CBS 708.71 / DSM 1257 / FGSC 987).